We begin with the raw amino-acid sequence, 286 residues long: Acyl-CoA-binding domain-containing protein 6 (286 aa).

Residues 1 to 24 (MASPGVLEESSSGEACSGGCPEQW) form a disordered region. Residues 8–22 (EESSSGEACSGGCPE) are compositionally biased toward low complexity. The 86-residue stretch at 32 to 117 (LQGQFEQAAK…VKKLDPDWSP (86 aa)) folds into the ACB domain. Residues 59–63 (YARYK), K85, and Y104 contribute to the an acyl-CoA site. 2 ANK repeats span residues 182–211 (EGRCLLHWACDRGHTQLVSVLLFHNAHINM) and 215–244 (EGQTPLHYASACEFPDIVDLLLDHGADPSL).

The protein localises to the cytoplasm. It is found in the nucleus. Binds long-chain acyl-coenzyme A molecules with a strong preference for unsaturated C18:1-CoA. Does not bind fatty acids. Plays a role in protein N-myristoylation. This chain is Acyl-CoA-binding domain-containing protein 6 (acbd6), found in Xenopus tropicalis (Western clawed frog).